A 233-amino-acid chain; its full sequence is Biosynthetic peptidoglycan transglycosylase (233 aa).

The helical transmembrane segment at Leu-8–Ile-28 threads the bilayer.

Belongs to the glycosyltransferase 51 family.

It localises to the cell inner membrane. The enzyme catalyses [GlcNAc-(1-&gt;4)-Mur2Ac(oyl-L-Ala-gamma-D-Glu-L-Lys-D-Ala-D-Ala)](n)-di-trans,octa-cis-undecaprenyl diphosphate + beta-D-GlcNAc-(1-&gt;4)-Mur2Ac(oyl-L-Ala-gamma-D-Glu-L-Lys-D-Ala-D-Ala)-di-trans,octa-cis-undecaprenyl diphosphate = [GlcNAc-(1-&gt;4)-Mur2Ac(oyl-L-Ala-gamma-D-Glu-L-Lys-D-Ala-D-Ala)](n+1)-di-trans,octa-cis-undecaprenyl diphosphate + di-trans,octa-cis-undecaprenyl diphosphate + H(+). It participates in cell wall biogenesis; peptidoglycan biosynthesis. Peptidoglycan polymerase that catalyzes glycan chain elongation from lipid-linked precursors. The chain is Biosynthetic peptidoglycan transglycosylase from Neisseria gonorrhoeae (strain NCCP11945).